Consider the following 134-residue polypeptide: Transcription antitermination protein NusB (134 aa).

The protein belongs to the NusB family.

In terms of biological role, involved in transcription antitermination. Required for transcription of ribosomal RNA (rRNA) genes. Binds specifically to the boxA antiterminator sequence of the ribosomal RNA (rrn) operons. The sequence is that of Transcription antitermination protein NusB from Halalkalibacterium halodurans (strain ATCC BAA-125 / DSM 18197 / FERM 7344 / JCM 9153 / C-125) (Bacillus halodurans).